The primary structure comprises 445 residues: UPF0210 protein SSA_2018 (445 aa).

It belongs to the UPF0210 family. As to quaternary structure, homodimer.

The sequence is that of UPF0210 protein SSA_2018 from Streptococcus sanguinis (strain SK36).